The primary structure comprises 802 residues: Vacuolar membrane protease (802 aa).

Over 1–13 the chain is Cytoplasmic; the sequence is MARYNPLAFTSGP. The helical transmembrane segment at 14–34 threads the bilayer; sequence VVFFITITYTALLIALLLTHL. Residues 35–357 are Vacuolar-facing; sequence TLPSYPSHPP…KVFIVFQLHT (323 aa). N-linked (GlcNAc...) asparagine glycans are attached at residues asparagine 48, asparagine 102, asparagine 105, and asparagine 112. The Zn(2+) site is built by histidine 152 and aspartate 164. Glutamate 198 acts as the Proton acceptor in catalysis. Zn(2+)-binding residues include glutamate 199, glutamate 224, and histidine 297. The chain crosses the membrane as a helical span at residues 358 to 378; it reads FFALCVTLLVVAPLTLIGLAW. Over 379–389 the chain is Cytoplasmic; it reads SLHKADRNYLF. A helical transmembrane segment spans residues 390–409; sequence ARKAFVYSADDDEPIHLYGW. Over 410-423 the chain is Vacuolar; the sequence is RGFFRFPIAFGIAT. The chain crosses the membrane as a helical span at residues 424–444; sequence SIVVGLAMMLSAWFAVSWFLL. The Cytoplasmic portion of the chain corresponds to 445–457; the sequence is HGADAMRPSALQR. Residues 458–478 form a helical membrane-spanning segment; it reads MYSLLWLFIGSFCLLVFFTIL. Over 479 to 490 the chain is Vacuolar; the sequence is ANNHQVAAGYPS. A helical membrane pass occupies residues 491-511; the sequence is LFCFATVFLANVLSFLELFLA. Over 512-609 the chain is Cytoplasmic; the sequence is PPKSAYAWNV…EQEWSGKLPS (98 aa). 2 disordered regions span residues 528–554 and 570–603; these read GSRP…ATET and AGRR…EQEW. A helical transmembrane segment spans residues 610–630; that stretch reads WIWIVQFSLLAPMIVILVGQI. Over 631–649 the chain is Vacuolar; that stretch reads ALLLTSALYQTPSDGNSPL. Residues 650–670 traverse the membrane as a helical segment; that stretch reads YIYTSIAALAVFLVAPIGPFI. At 671-677 the chain is on the cytoplasmic side; sequence HRFTHHV. A helical membrane pass occupies residues 678–698; that stretch reads PTFLFLLCVATTIYNLVAFPF. The Vacuolar portion of the chain corresponds to 699 to 802; the sequence is SEQHKLKVYF…HDDSNNRGRR (104 aa). N-linked (GlcNAc...) asparagine glycosylation is found at asparagine 746 and asparagine 779.

This sequence belongs to the peptidase M28 family. Zn(2+) serves as cofactor.

It is found in the vacuole membrane. Functionally, may be involved in vacuolar sorting and osmoregulation. The protein is Vacuolar membrane protease of Leptosphaeria maculans (strain JN3 / isolate v23.1.3 / race Av1-4-5-6-7-8) (Blackleg fungus).